We begin with the raw amino-acid sequence, 375 residues long: Probable pectin lyase C (375 aa).

Positions 1–20 (MKITSTIPAVLLGLAPLSAA) are cleaved as a signal peptide. 2 disulfide bridges follow: Cys83-Cys100 and Cys92-Cys220. Arg250 is a catalytic residue. A disulfide bond links Cys317 and Cys325.

This sequence belongs to the polysaccharide lyase 1 family.

It localises to the secreted. The enzyme catalyses Eliminative cleavage of (1-&gt;4)-alpha-D-galacturonan methyl ester to give oligosaccharides with 4-deoxy-6-O-methyl-alpha-D-galact-4-enuronosyl groups at their non-reducing ends.. Pectinolytic enzymes consist of four classes of enzymes: pectin lyase, polygalacturonase, pectin methylesterase and rhamnogalacturonase. Among pectinolytic enzymes, pectin lyase is the most important in depolymerization of pectin, since it cleaves internal glycosidic bonds of highly methylated pectins. The chain is Probable pectin lyase C (pelC) from Aspergillus oryzae (strain ATCC 42149 / RIB 40) (Yellow koji mold).